A 238-amino-acid polypeptide reads, in one-letter code: tRNA (guanine-N(7)-)-methyltransferase (238 aa).

Residues E68, E93, D120, and D143 each coordinate S-adenosyl-L-methionine. Residue D143 is part of the active site. Substrate contacts are provided by residues K147, D179, and 216–219; that span reads TKFE.

The protein belongs to the class I-like SAM-binding methyltransferase superfamily. TrmB family.

It carries out the reaction guanosine(46) in tRNA + S-adenosyl-L-methionine = N(7)-methylguanosine(46) in tRNA + S-adenosyl-L-homocysteine. It participates in tRNA modification; N(7)-methylguanine-tRNA biosynthesis. Catalyzes the formation of N(7)-methylguanine at position 46 (m7G46) in tRNA. This is tRNA (guanine-N(7)-)-methyltransferase from Shewanella denitrificans (strain OS217 / ATCC BAA-1090 / DSM 15013).